The sequence spans 435 residues: Glutamate-1-semialdehyde 2,1-aminomutase (435 aa).

K266 carries the N6-(pyridoxal phosphate)lysine modification.

Belongs to the class-III pyridoxal-phosphate-dependent aminotransferase family. HemL subfamily. In terms of assembly, homodimer. Pyridoxal 5'-phosphate serves as cofactor.

The protein resides in the cytoplasm. It carries out the reaction (S)-4-amino-5-oxopentanoate = 5-aminolevulinate. It functions in the pathway porphyrin-containing compound metabolism; protoporphyrin-IX biosynthesis; 5-aminolevulinate from L-glutamyl-tRNA(Glu): step 2/2. This Helicobacter hepaticus (strain ATCC 51449 / 3B1) protein is Glutamate-1-semialdehyde 2,1-aminomutase.